A 228-amino-acid polypeptide reads, in one-letter code: Phosphoribosylformylglycinamidine synthase subunit PurQ (228 aa).

Positions 3 to 226 constitute a Glutamine amidotransferase type-1 domain; sequence FAVIVFPGSN…IANWRDSYAI (224 aa). Residue Cys-87 is the Nucleophile of the active site. Residues His-195 and Glu-197 contribute to the active site.

As to quaternary structure, part of the FGAM synthase complex composed of 1 PurL, 1 PurQ and 2 PurS subunits.

It localises to the cytoplasm. It catalyses the reaction N(2)-formyl-N(1)-(5-phospho-beta-D-ribosyl)glycinamide + L-glutamine + ATP + H2O = 2-formamido-N(1)-(5-O-phospho-beta-D-ribosyl)acetamidine + L-glutamate + ADP + phosphate + H(+). The enzyme catalyses L-glutamine + H2O = L-glutamate + NH4(+). It participates in purine metabolism; IMP biosynthesis via de novo pathway; 5-amino-1-(5-phospho-D-ribosyl)imidazole from N(2)-formyl-N(1)-(5-phospho-D-ribosyl)glycinamide: step 1/2. Part of the phosphoribosylformylglycinamidine synthase complex involved in the purines biosynthetic pathway. Catalyzes the ATP-dependent conversion of formylglycinamide ribonucleotide (FGAR) and glutamine to yield formylglycinamidine ribonucleotide (FGAM) and glutamate. The FGAM synthase complex is composed of three subunits. PurQ produces an ammonia molecule by converting glutamine to glutamate. PurL transfers the ammonia molecule to FGAR to form FGAM in an ATP-dependent manner. PurS interacts with PurQ and PurL and is thought to assist in the transfer of the ammonia molecule from PurQ to PurL. The polypeptide is Phosphoribosylformylglycinamidine synthase subunit PurQ (Oceanobacillus iheyensis (strain DSM 14371 / CIP 107618 / JCM 11309 / KCTC 3954 / HTE831)).